The sequence spans 558 residues: Putative F-box/LRR-repeat protein R542 (558 aa).

Positions Met1–Phe47 constitute an F-box domain. 10 LRR repeats span residues Lys73–Phe105, Cys139–Cys176, Cys177–Gly220, Leu251–Gly284, Cys285–Tyr317, Cys329–Tyr361, Val369–Asp395, Cys420–Tyr444, Cys445–Tyr477, and Ser481–Thr508.

This Acanthamoeba polyphaga mimivirus (APMV) protein is Putative F-box/LRR-repeat protein R542.